Reading from the N-terminus, the 681-residue chain is Angiomotin-like 2b (681 aa).

The segment covering 68–84 (GGGAASSSQSSSESLSQ) has biased composition (low complexity). Positions 68–106 (GGGAASSSQSSSESLSQDEPHSPQLSTRQEPQGQEHQVD) are disordered. Residues 90-102 (PQLSTRQEPQGQE) are compositionally biased toward polar residues. Tyr126 carries the phosphotyrosine; by FGFR1 modification. 3 coiled-coil regions span residues 268–319 (NACS…LMKG), 362–441 (IEKL…LQAT), and 481–508 (VYTL…WEQK). Residues 589-618 (QLGALQPATADSSIISSHSTPAHTAQGKER) are disordered. The segment covering 597–611 (TADSSIISSHSTPAH) has biased composition (polar residues). The PDZ-binding signature appears at 678 to 681 (EIFI).

It belongs to the angiomotin family. As to quaternary structure, interacts with SRC. Post-translationally, phosphorylation at Tyr-126 is necessary for efficient binding to SRC and synergistically functioning with SRC to activate the downstream MAPK pathway. Expressed in endothelial cells.

It localises to the recycling endosome. It is found in the cytoplasm. Its subcellular location is the cell projection. The protein resides in the podosome. The protein localises to the cell junction. In terms of biological role, required for proper architecture of actin filaments and for cell movements during embryogenesis. Plays a role in the radial actin fiber architecture in skin epithelial cells, thereby maintains cell geometry, size and cell interconnectivity within the skin. Plays an important role in coupling actin fibers to cell junctions in endothelial cells and is therefore required for correct endothelial cell morphology and maintenance of dorsal aorta lumen expansion during embryogenesis. May further play a role in the polarity, proliferation and migration of endothelial cells, and therefore participates in angiogenesis. May regulate the translocation of phosphorylated SRC to peripheral cell-matrix adhesion sites. The protein is Angiomotin-like 2b of Danio rerio (Zebrafish).